Here is a 264-residue protein sequence, read N- to C-terminus: Splicing factor U2af 38 kDa subunit (264 aa).

A C3H1-type 1 zinc finger spans residues 12–40; the sequence is EKDKVNCSFYFKIGACRHGDRCSRIHNKP. Ser19 is subject to Phosphoserine. The region spanning 44 to 149 is the RRM domain; sequence QTVLLQNLYV…RPVYSELSPV (106 aa). A C3H1-type 2 zinc finger spans residues 151–178; that stretch reads DFREACCRQYEMGECTRSGFCNFMHLKP. Positions 190-219 are enriched in basic residues; the sequence is RRRRARSRSRSPGRRRGSRSRSRSPGRRGG. Positions 190–264 are disordered; the sequence is RRRRARSRSR…GGGGGGGGRY (75 aa). Residues 233–251 show a composition bias toward basic and acidic residues; it reads NERDNMRGNDRGNDRDRRK. Gly residues predominate over residues 253–264; the sequence is GGGGGGGGGGRY.

The protein belongs to the splicing factor SR family. As to quaternary structure, associates with a 65 kDa protein.

It is found in the nucleus. Necessary for the splicing of pre-mRNA. Binds to the polypyrimidine tract of introns early during spliceosome assembly. This Drosophila melanogaster (Fruit fly) protein is Splicing factor U2af 38 kDa subunit (U2af38).